The primary structure comprises 417 residues: Equilibrative nucleotide transporter 2 (417 aa).

11 helical membrane passes run 20–40 (AVCW…LTIV), 52–72 (PSRI…SVLV), 85–105 (LFGY…NLAT), 109–129 (GGIG…LADA), 144–164 (PEFL…TSGL), 185–205 (LFFA…AYVF), 265–285 (LAVT…GFLS), 292–312 (SLGD…DLVG), 328–348 (CLLI…ITGI), 354–374 (WMIF…VCVI), and 393–413 (LVLY…LWLV).

Belongs to the SLC29A/ENT transporter (TC 2.A.57) family. As to expression, expressed in leaves and flowers.

Its subcellular location is the cell membrane. Functionally, may be involved in nucleoside transport. The protein is Equilibrative nucleotide transporter 2 (ENT2) of Arabidopsis thaliana (Mouse-ear cress).